Here is a 444-residue protein sequence, read N- to C-terminus: Structure-specific endonuclease subunit SLX1 (444 aa).

The GIY-YIG domain occupies 23-105 (AFSCCYLLRS…QNTKVSRHAD (83 aa)). Residues 240–295 (CGVCKQRLILQHDIIAVCSHSSCHCAAHLSCLSSHFLKDKDSDSELVPREGTCPTC) form an SLX1-type zinc finger. The disordered stretch occupies residues 324 to 354 (RRQRAGTPKGQGLKSVRGRGHSEDENESDAL).

This sequence belongs to the SLX1 family. As to quaternary structure, forms a heterodimer with SLX4. A divalent metal cation is required as a cofactor.

It localises to the nucleus. Catalytic subunit of the SLX1-SLX4 structure-specific endonuclease that resolves DNA secondary structures generated during DNA repair and recombination. Has endonuclease activity towards branched DNA substrates, introducing single-strand cuts in duplex DNA close to junctions with ss-DNA. In Paracoccidioides lutzii (strain ATCC MYA-826 / Pb01) (Paracoccidioides brasiliensis), this protein is Structure-specific endonuclease subunit SLX1.